The primary structure comprises 408 residues: NADH-quinone oxidoreductase subunit D (408 aa).

This sequence belongs to the complex I 49 kDa subunit family. As to quaternary structure, NDH-1 is composed of 14 different subunits. Subunits NuoB, C, D, E, F, and G constitute the peripheral sector of the complex.

It localises to the cell inner membrane. The catalysed reaction is a quinone + NADH + 5 H(+)(in) = a quinol + NAD(+) + 4 H(+)(out). Functionally, NDH-1 shuttles electrons from NADH, via FMN and iron-sulfur (Fe-S) centers, to quinones in the respiratory chain. The immediate electron acceptor for the enzyme in this species is believed to be ubiquinone. Couples the redox reaction to proton translocation (for every two electrons transferred, four hydrogen ions are translocated across the cytoplasmic membrane), and thus conserves the redox energy in a proton gradient. The protein is NADH-quinone oxidoreductase subunit D of Wolinella succinogenes (strain ATCC 29543 / DSM 1740 / CCUG 13145 / JCM 31913 / LMG 7466 / NCTC 11488 / FDC 602W) (Vibrio succinogenes).